Consider the following 975-residue polypeptide: Translation initiation factor IF-2 (975 aa).

Basic and acidic residues-rich tracts occupy residues 48–63 (DHLR…DKRK) and 120–177 (AELK…EAAA). Disordered stretches follow at residues 48–85 (DHLR…KART) and 98–390 (KRDD…PTEP). The span at 178–211 (KRAAAAQAEAAQQAAAAREQAQRAQSEPAEQSAQ) shows a compositional bias: low complexity. The span at 212-263 (DEARAAAERAAQREAAKKAEDAAREAADKARAEQEEIRKRREAAEAEARAIR) shows a compositional bias: basic and acidic residues. Low complexity predominate over residues 302–330 (KPAGEAAAARPAAKKPASGAPAPAAAPAG). The span at 359–372 (SSGGVDRGWRGGPK) shows a compositional bias: gly residues. The tr-type G domain maps to 475-644 (PRPPVVTVMG…LLQAEVLELK (170 aa)). A G1 region spans residues 484 to 491 (GHVDHGKT). 484 to 491 (GHVDHGKT) lines the GTP pocket. The segment at 509–513 (GITQH) is G2. Residues 530–533 (DTPG) form a G3 region. GTP is bound by residues 530-534 (DTPGH) and 584-587 (NKID). Positions 584 to 587 (NKID) are G4. Residues 620 to 622 (SAK) form a G5 region.

This sequence belongs to the TRAFAC class translation factor GTPase superfamily. Classic translation factor GTPase family. IF-2 subfamily.

It is found in the cytoplasm. Functionally, one of the essential components for the initiation of protein synthesis. Protects formylmethionyl-tRNA from spontaneous hydrolysis and promotes its binding to the 30S ribosomal subunits. Also involved in the hydrolysis of GTP during the formation of the 70S ribosomal complex. This is Translation initiation factor IF-2 from Burkholderia pseudomallei (strain 1106a).